A 380-amino-acid polypeptide reads, in one-letter code: MKNISLLGASGSIGTQTLDVLRSHPDQFRLVAFSVGKNIDYAVKVIQEFSPQIVSVQREEDVLKLQAVSGNTKIVYGSEGLLEVALHPDAEIVVNAVVGSVGLLPTLRAIEAKKTIGIANKETLVTAGHLVMEAARKHNVSLLPVDSEHSAIFQCLNGENEKRISRLIITASGGSFRDKTRDELHHVTVEDALRHPNWSMGSKITIDSATMMNKGLEVIEAHWLFGIPYEQIDVVLHKESIIHSMVEFEDRSVMAQLGSPDMRVPIQYALTYPDRLPLSDTKQLNLWEMGTLHFEKMNQERFRCLRFAYEAGKTGGSMPAVMNAANEVAVEAFLQKRIGFLTVEDLIEKAMNHHNVIARPSLEEILEIDATTRRFVMEQI.

Residues Ser10, Gly11, Ser12, Ile13, Gly36, Lys37, Asn38, and Asn120 each contribute to the NADPH site. Lys121 is a 1-deoxy-D-xylulose 5-phosphate binding site. Residue Glu122 coordinates NADPH. Asp146 is a binding site for Mn(2+). The 1-deoxy-D-xylulose 5-phosphate site is built by Ser147, Glu148, Ser172, and His195. Glu148 contacts Mn(2+). Gly201 lines the NADPH pocket. 1-deoxy-D-xylulose 5-phosphate contacts are provided by Ser208, Asn213, Lys214, and Glu217. Residue Glu217 participates in Mn(2+) binding.

The protein belongs to the DXR family. Requires Mg(2+) as cofactor. Mn(2+) is required as a cofactor.

It carries out the reaction 2-C-methyl-D-erythritol 4-phosphate + NADP(+) = 1-deoxy-D-xylulose 5-phosphate + NADPH + H(+). The protein operates within isoprenoid biosynthesis; isopentenyl diphosphate biosynthesis via DXP pathway; isopentenyl diphosphate from 1-deoxy-D-xylulose 5-phosphate: step 1/6. In terms of biological role, catalyzes the NADPH-dependent rearrangement and reduction of 1-deoxy-D-xylulose-5-phosphate (DXP) to 2-C-methyl-D-erythritol 4-phosphate (MEP). This Bacillus cereus (strain ATCC 10987 / NRS 248) protein is 1-deoxy-D-xylulose 5-phosphate reductoisomerase.